Reading from the N-terminus, the 556-residue chain is Genetic interactor of prohibitins 3, mitochondrial (556 aa).

The N-terminal 21 residues, 1–21, are a transit peptide targeting the mitochondrion; sequence MLNLCHALRGVRQFSCSVIVK. Positions 113–305 constitute a CP-type G domain; it reads ESTLNDILNY…LFDLPGYSTS (193 aa).

The protein belongs to the TRAFAC class YlqF/YawG GTPase family. GEP3 subfamily.

The protein localises to the mitochondrion. Functionally, interacts genetically with prohibitins and thus may be involved in the mitochondrial lipid metabolism. The chain is Genetic interactor of prohibitins 3, mitochondrial (GEP3) from Saccharomyces cerevisiae (strain JAY291) (Baker's yeast).